A 213-amino-acid chain; its full sequence is UPF0301 protein RPC_0788 (213 aa).

Residues 1–20 (MDPKSKAPKRDETKGADDAS) form a disordered region.

Belongs to the UPF0301 (AlgH) family.

The sequence is that of UPF0301 protein RPC_0788 from Rhodopseudomonas palustris (strain BisB18).